Consider the following 180-residue polypeptide: Cytochrome c oxidase assembly protein CtaG (180 aa).

The Cytoplasmic portion of the chain corresponds to 1–8; sequence MSKKSNKS. A helical; Signal-anchor for type II membrane protein transmembrane segment spans residues 9-29; the sequence is LAFSLLGLIVSMVLLSFAAVP. At 30 to 180 the chain is on the periplasmic side; that stretch reads LYNLFCKVTG…SFFKVRDVKK (151 aa).

This sequence belongs to the COX11/CtaG family.

The protein localises to the cell inner membrane. Its function is as follows. Exerts its effect at some terminal stage of cytochrome c oxidase synthesis, probably by being involved in the insertion of the copper B into subunit I. The protein is Cytochrome c oxidase assembly protein CtaG of Rickettsia bellii (strain RML369-C).